A 517-amino-acid polypeptide reads, in one-letter code: Lysophosphatidylcholine acyltransferase 1 (517 aa).

Over 1-52 (MRFPNRKLHTAVNGGDSGVSTHFRNPFVHELRFTTLQKLKIAVMTVTLFPVR) the chain is Cytoplasmic. Residues 53-73 (LLFAAFMMLLAWPFAFVATVG) form a helical; Signal-anchor for type II membrane protein membrane-spanning segment. Over 74 to 517 (RSENAVEPLS…SPRNHSKKQD (444 aa)) the chain is Lumenal. The HXXXXD motif signature appears at 129–134 (HSSYFD). The N-linked (GlcNAc...) asparagine glycan is linked to Asn-207. The EF-hand domain maps to 443-478 (VGDLAVSELFRAIDSQDKGKITFDELCSFMEKCPDL). Asn-511 is a glycosylation site (N-linked (GlcNAc...) asparagine). Positions 514 to 517 (KKQD) match the Di-lysine motif motif.

Belongs to the 1-acyl-sn-glycerol-3-phosphate acyltransferase family.

The protein localises to the endoplasmic reticulum membrane. The protein resides in the golgi apparatus membrane. It localises to the cell membrane. Its subcellular location is the lipid droplet. The catalysed reaction is a 1-acyl-sn-glycero-3-phosphocholine + an acyl-CoA = a 1,2-diacyl-sn-glycero-3-phosphocholine + CoA. It catalyses the reaction a 1-O-alkyl-sn-glycero-3-phosphocholine + acetyl-CoA = a 1-O-alkyl-2-acetyl-sn-glycero-3-phosphocholine + CoA. The enzyme catalyses a 1-acyl-sn-glycero-3-phosphate + an acyl-CoA = a 1,2-diacyl-sn-glycero-3-phosphate + CoA. It carries out the reaction a 1-O-(1Z-alkenyl)-sn-glycero-3-phosphocholine + an acyl-CoA = a 1-O-(1Z-alkenyl)-2-acyl-sn-glycero-3-phosphocholine + CoA. The catalysed reaction is 1-acyl-sn-glycero-3-phospho-(1'-sn-glycerol) + an acyl-CoA = a 1,2-diacyl-sn-glycero-3-phospho-(1'-sn-glycerol) + CoA. It catalyses the reaction 1-hexadecanoyl-sn-glycero-3-phosphocholine + hexadecanoyl-CoA = 1,2-dihexadecanoyl-sn-glycero-3-phosphocholine + CoA. The enzyme catalyses 1-O-hexadecyl-sn-glycero-3-phosphocholine + hexadecanoyl-CoA = 1-O-hexadecyl-2-hexadecanoyl-sn-glycero-3-phosphocholine + CoA. It carries out the reaction a 1-O-(1Z-alkenyl)-sn-glycero-3-phosphocholine + hexadecanoyl-CoA = 1-O-(1Z)-alkenyl-2-hexadecanoyl-sn-glycero-3-phosphocholine + CoA. The catalysed reaction is 1-hexadecanoyl-sn-glycero-3-phospho-(1'-sn-glycerol) + hexadecanoyl-CoA = 1,2-dihexadecanoyl-sn-glycero-3-phospho-(1'-sn-glycerol) + CoA. It catalyses the reaction 1-dodecanoyl-sn-glycero-3-phosphocholine + hexadecanoyl-CoA = 1-dodecanoyl-2-hexadecanoyl-sn-glycero-3-phosphocholine + CoA. The enzyme catalyses 1-tetradecanoyl-sn-glycero-3-phosphocholine + hexadecanoyl-CoA = 1-tetradecanoyl-2-hexadecanoyl-sn-glycero-3-phosphocholine + CoA. It carries out the reaction 1-O-octadecyl-sn-glycero-3-phosphocholine + hexadecanoyl-CoA = 1-O-octadecyl-2-hexadecanoyl-sn-glycero-3-phosphocholine + CoA. The catalysed reaction is 1-octadecanoyl-sn-glycero-3-phosphocholine + hexadecanoyl-CoA = 1-octadecanoyl-2-hexadecanoyl-sn-glycero-3-phosphocholine + CoA. It catalyses the reaction 1-(9Z-octadecenoyl)-sn-glycero-3-phosphocholine + hexadecanoyl-CoA = 1-(9Z-octadecenoyl)-2-hexadecanoyl-sn-glycero-3-phosphocholine + CoA. The enzyme catalyses 1-eicosanoyl-sn-glycero-3-phosphocholine + hexadecanoyl-CoA = 1-eicosanoyl-2-hexadecanoyl-sn-glycero-3-phosphocholine + CoA. It carries out the reaction hexanoyl-CoA + 1-hexadecanoyl-sn-glycero-3-phosphocholine = 1-hexadecanoyl-2-hexanoyl-sn-glycero-3-phosphocholine + CoA. The catalysed reaction is octanoyl-CoA + 1-hexadecanoyl-sn-glycero-3-phosphocholine = 1-hexadecanoyl-2-octanoyl-sn-glycero-3-phosphocholine + CoA. It catalyses the reaction decanoyl-CoA + 1-hexadecanoyl-sn-glycero-3-phosphocholine = 1-hexadecanoyl-2-decanoyl-sn-glycero-3-phosphocholine + CoA. The enzyme catalyses dodecanoyl-CoA + 1-hexadecanoyl-sn-glycero-3-phosphocholine = 1-hexadecanoyl-2-dodecanoyl-sn-glycero-3-phosphocholine + CoA. It carries out the reaction tetradecanoyl-CoA + 1-hexadecanoyl-sn-glycero-3-phosphocholine = 1-hexadecanoyl-2-tetradecanoyl-sn-glycero-3-phosphocholine + CoA. The catalysed reaction is 1-hexadecanoyl-sn-glycero-3-phosphocholine + (9Z)-octadecenoyl-CoA = 1-hexadecanoyl-2-(9Z-octadecenoyl)-sn-glycero-3-phosphocholine + CoA. It catalyses the reaction (9Z,12Z)-octadecadienoyl-CoA + 1-hexadecanoyl-sn-glycero-3-phosphocholine = 1-hexadecanoyl-2-(9Z,12Z-octadecadienoyl)-sn-glycero-3-phosphocholine + CoA. The enzyme catalyses (4Z,7Z,10Z,13Z,16Z,19Z)-docosahexaenoyl-CoA + 1-hexadecanoyl-sn-glycero-3-phosphocholine = 1-hexadecanoyl-2-(4Z,7Z,10Z,13Z,16Z,19Z-docosahexaenoyl)-sn-glycero-3-phosphocholine + CoA. It carries out the reaction 1-hexadecanoyl-sn-glycero-3-phosphocholine + acetyl-CoA = 1-hexadecanoyl-2-acetyl-sn-glycero-3-phosphocholine + CoA. The catalysed reaction is eicosanoyl-CoA + 1-hexadecanoyl-sn-glycero-3-phosphocholine = 1-hexadecanoyl-2-eicosanoyl-sn-glycero-3-phosphocholine + CoA. It catalyses the reaction 1-O-hexadecyl-sn-glycero-3-phosphocholine + acetyl-CoA = 1-O-hexadecyl-2-acetyl-sn-glycero-3-phosphocholine + CoA. The enzyme catalyses a 1-acyl-sn-glycero-3-phosphocholine + hexadecanoyl-CoA = 1-acyl-2-hexadecanoyl-sn-glycero-3-phosphocholine + CoA. It carries out the reaction a 1-acyl-sn-glycero-3-phosphate + hexadecanoyl-CoA = 1-acyl-2-hexadecanoyl-sn-glycero-3-phosphate + CoA. The catalysed reaction is 1-acyl-sn-glycero-3-phospho-(1'-sn-glycerol) + hexadecanoyl-CoA = 1-acyl-2-hexadecanoyl-sn-glycero-3-phospho-(1'-sn-glycerol) + CoA. It participates in lipid metabolism; phospholipid metabolism. Functionally, exhibits both acyltransferase and acetyltransferase activities. Activity is calcium-independent. Catalyzes the conversion of lysophosphatidylcholine (1-acyl-sn-glycero-3-phosphocholine or LPC) into phosphatidylcholine (1,2-diacyl-sn-glycero-3-phosphocholine or PC). Catalyzes the conversion 1-acyl-sn-glycerol-3-phosphate (lysophosphatidic acid or LPA) into 1,2-diacyl-sn-glycerol-3-phosphate (phosphatidic acid or PA) by incorporating an acyl moiety at the sn-2 position of the glycerol backbone. The sequence is that of Lysophosphatidylcholine acyltransferase 1 (lpcat1) from Danio rerio (Zebrafish).